The following is an 883-amino-acid chain: Phosphoenolpyruvate carboxylase (883 aa).

Residues H138 and K546 contribute to the active site.

It belongs to the PEPCase type 1 family. Requires Mg(2+) as cofactor.

The catalysed reaction is oxaloacetate + phosphate = phosphoenolpyruvate + hydrogencarbonate. Its function is as follows. Forms oxaloacetate, a four-carbon dicarboxylic acid source for the tricarboxylic acid cycle. This chain is Phosphoenolpyruvate carboxylase, found in Enterobacter sp. (strain 638).